A 420-amino-acid chain; its full sequence is UDP-N-acetylglucosamine 1-carboxyvinyltransferase (420 aa).

Residue 22 to 23 participates in phosphoenolpyruvate binding; sequence KN. Arg-93 serves as a coordination point for UDP-N-acetyl-alpha-D-glucosamine. Cys-117 acts as the Proton donor in catalysis. A 2-(S-cysteinyl)pyruvic acid O-phosphothioketal modification is found at Cys-117. UDP-N-acetyl-alpha-D-glucosamine is bound by residues Asp-307 and Ile-329.

This sequence belongs to the EPSP synthase family. MurA subfamily.

It is found in the cytoplasm. The catalysed reaction is phosphoenolpyruvate + UDP-N-acetyl-alpha-D-glucosamine = UDP-N-acetyl-3-O-(1-carboxyvinyl)-alpha-D-glucosamine + phosphate. It functions in the pathway cell wall biogenesis; peptidoglycan biosynthesis. Cell wall formation. Adds enolpyruvyl to UDP-N-acetylglucosamine. The sequence is that of UDP-N-acetylglucosamine 1-carboxyvinyltransferase from Cellvibrio japonicus (strain Ueda107) (Pseudomonas fluorescens subsp. cellulosa).